Reading from the N-terminus, the 568-residue chain is Potassium-transporting ATPase potassium-binding subunit (568 aa).

A run of 10 helical transmembrane segments spans residues 7–27, 65–85, 135–155, 177–197, 254–274, 286–306, 383–403, 422–442, 489–509, and 530–550; these read AEIAFILGLTVALGWPLGLFL, SYALALLAFSAASFILLYAIL, AGLTSHNFLSAAAGIAVAAAV, VSLYLLLPLSIVIALVFVALG, LTNLIEIVEMNVLGFACVVAF, ALITVMAIFVAVAASVIYWTE, GLYGMIVLALIAVFVAGLMVG, MLAVLILPLAILGFSAAAAVL, LGIAMLLGRFGYVIPVLAIAG, and LFIGLLIGVILILGGLQFFPA.

The protein belongs to the KdpA family. In terms of assembly, the system is composed of three essential subunits: KdpA, KdpB and KdpC.

The protein localises to the cell inner membrane. Functionally, part of the high-affinity ATP-driven potassium transport (or Kdp) system, which catalyzes the hydrolysis of ATP coupled with the electrogenic transport of potassium into the cytoplasm. This subunit binds the periplasmic potassium ions and delivers the ions to the membrane domain of KdpB through an intramembrane tunnel. This chain is Potassium-transporting ATPase potassium-binding subunit, found in Beijerinckia indica subsp. indica (strain ATCC 9039 / DSM 1715 / NCIMB 8712).